The chain runs to 497 residues: Probable small intestine urate exporter (497 aa).

Residues N47, N56, N66, N75, and N90 are each glycosylated (N-linked (GlcNAc...) asparagine). The next 10 membrane-spanning stretches (helical) occupy residues 149–169, 171–191, 203–223, 230–250, 292–312, 332–352, 368–388, 398–418, 431–451, and 461–481; these read SFLT…LIVL, IVQG…WVKW, IAGS…GLLC, YVFY…FPLI, LPLW…YTIM, ILSA…GLLA, KLFT…LPWV, FLVL…VNFL, LLQV…GFFI, and NVFL…LIFG.

Belongs to the major facilitator superfamily. Sodium/anion cotransporter family. In terms of tissue distribution, abundantly expressed in pancreas, liver, colon and small intestine, less in kidney. Not detected in the adrenal glands, brain, placenta, heart, testis, skeletal muscle, and lungs.

Its subcellular location is the apical cell membrane. It catalyses the reaction 3 Na(+)(out) + phosphate(out) = 3 Na(+)(in) + phosphate(in). It carries out the reaction urate(out) + n chloride(in) = urate(in) + n chloride(out). The catalysed reaction is L-thyroxine(out) = L-thyroxine(in). The enzyme catalyses 3,3',5-triiodo-L-thyronine(out) = 3,3',5-triiodo-L-thyronine(in). Its function is as follows. Acts as a membrane potential-dependent organic anion transporter, the transport requires a low concentration of chloride ions. Mediates chloride-dependent transport of urate. Mediates sodium-independent high affinity transport of thyroid hormones including L-thyroxine (T4) and 3,3',5-triiodo-L-thyronine (T3). Can actively transport inorganic phosphate into cells via Na(+) cotransport. This Homo sapiens (Human) protein is Probable small intestine urate exporter (SLC17A4).